A 165-amino-acid chain; its full sequence is Peptide methionine sulfoxide reductase MsrA (165 aa).

Cysteine 11 is an active-site residue.

This sequence belongs to the MsrA Met sulfoxide reductase family.

The enzyme catalyses L-methionyl-[protein] + [thioredoxin]-disulfide + H2O = L-methionyl-(S)-S-oxide-[protein] + [thioredoxin]-dithiol. It carries out the reaction [thioredoxin]-disulfide + L-methionine + H2O = L-methionine (S)-S-oxide + [thioredoxin]-dithiol. Functionally, has an important function as a repair enzyme for proteins that have been inactivated by oxidation. Catalyzes the reversible oxidation-reduction of methionine sulfoxide in proteins to methionine. The protein is Peptide methionine sulfoxide reductase MsrA of Ureaplasma urealyticum serovar 10 (strain ATCC 33699 / Western).